The following is an 802-amino-acid chain: Peptidyl serine alpha-galactosyltransferase (802 aa).

An N-terminal signal peptide occupies residues Met-1–Ala-19. The Extracellular segment spans residues Asp-20–Leu-750. Residues Asn-214, Asn-275, Asn-425, and Asn-637 are each glycosylated (N-linked (GlcNAc...) asparagine). The segment at Arg-699–Ser-741 is disordered. A helical transmembrane segment spans residues Trp-751–Phe-771. The Cytoplasmic segment spans residues Ser-772 to Lys-802. Residues Arg-777–Thr-791 are compositionally biased toward basic residues. The interval Arg-777 to Lys-802 is disordered. Over residues Ser-792 to Lys-802 the composition is skewed to polar residues.

It is found in the endoplasmic reticulum membrane. Functionally, glycosyltransferase involved in the O-galactosylation of several proteins including extensins. Catalyzes the transfer of alpha-galactosyl to Ser residues. Hydroxylation of proline residues adjacent to the serine acceptor is required for activity. This Arabidopsis thaliana (Mouse-ear cress) protein is Peptidyl serine alpha-galactosyltransferase.